The following is a 382-amino-acid chain: Type II secretion system protein L (382 aa).

Topologically, residues 1–233 (MSGVSALFLP…QQSSQWRRWR (233 aa)) are cytoplasmic. The chain crosses the membrane as a helical span at residues 234-254 (PLLGLVGLWLVLQWGFTLVQA). Over 255–382 (WQLQREGDRY…TVSARLVIGG (128 aa)) the chain is Periplasmic.

This sequence belongs to the GSP L family. Type II secretion system is composed of four main components: the outer membrane complex, the inner membrane complex, the cytoplasmic secretion ATPase and the periplasm-spanning pseudopilus. Forms homodimers. Interacts with XcpZ/GspM. Interacts with XcpR/GspE and XcpS/GspF.

Its subcellular location is the cell inner membrane. In terms of biological role, inner membrane component of the type II secretion system required for the energy-dependent secretion of extracellular factors such as proteases and toxins from the periplasm. Plays a role in the complex assembly and recruits XcpZ resulting in a stable complex in the inner membrane. Provides thus a link between the energy-providing XcpR protein in the cytoplasm and the rest of the T2SS machinery. This is Type II secretion system protein L (xcpY) from Pseudomonas aeruginosa (strain ATCC 15692 / DSM 22644 / CIP 104116 / JCM 14847 / LMG 12228 / 1C / PRS 101 / PAO1).